We begin with the raw amino-acid sequence, 380 residues long: MEPAIKYRLIKKEKHTGARLGELITPHGTFPTPMFMPVGTQASVKSLAPEELDAMGAGVILSNTYHLWLRPGEQIVKEAGGLHQFMNWKKGILTDSGGFQVFSLAKNRDITEEGVHFKNHLNGSKMFLSPEKAIQIENDLGPDIMMSLDECPPFFESYDYVSKSVARTSRWAERGLKVHQHPDYQGLFGIVQGAGFKDLREQSAKDLVSLDFPGYSIGGLSVGESKAEMNHVLDFTTPLLPENKPRYLMGVGSADALIDGAIRGVDMFDCVLPTRIARNGTCMTSHGRLVVKNAAYAHDFTPLDDNCDCYTCRNFTRAYIRHLIKADETFGLRLTSYHNLYFLLHLMKQVRQAIMDDNLLEFRQNFFEMYGFNDKNPKNF.

Catalysis depends on Asp95, which acts as the Proton acceptor. Substrate contacts are provided by residues 95 to 99 (DSGGF), Asp149, Gln192, and Gly219. The tract at residues 250-256 (GVGSADA) is RNA binding. Asp269 (nucleophile) is an active-site residue. Residues 274 to 278 (TRIAR) form an RNA binding; important for wobble base 34 recognition region. Residues Cys307, Cys309, Cys312, and His338 each contribute to the Zn(2+) site.

This sequence belongs to the queuine tRNA-ribosyltransferase family. As to quaternary structure, homodimer. Within each dimer, one monomer is responsible for RNA recognition and catalysis, while the other monomer binds to the replacement base PreQ1. It depends on Zn(2+) as a cofactor.

It carries out the reaction 7-aminomethyl-7-carbaguanine + guanosine(34) in tRNA = 7-aminomethyl-7-carbaguanosine(34) in tRNA + guanine. The protein operates within tRNA modification; tRNA-queuosine biosynthesis. Functionally, catalyzes the base-exchange of a guanine (G) residue with the queuine precursor 7-aminomethyl-7-deazaguanine (PreQ1) at position 34 (anticodon wobble position) in tRNAs with GU(N) anticodons (tRNA-Asp, -Asn, -His and -Tyr). Catalysis occurs through a double-displacement mechanism. The nucleophile active site attacks the C1' of nucleotide 34 to detach the guanine base from the RNA, forming a covalent enzyme-RNA intermediate. The proton acceptor active site deprotonates the incoming PreQ1, allowing a nucleophilic attack on the C1' of the ribose to form the product. After dissociation, two additional enzymatic reactions on the tRNA convert PreQ1 to queuine (Q), resulting in the hypermodified nucleoside queuosine (7-(((4,5-cis-dihydroxy-2-cyclopenten-1-yl)amino)methyl)-7-deazaguanosine). The protein is Queuine tRNA-ribosyltransferase of Lactiplantibacillus plantarum (strain ATCC BAA-793 / NCIMB 8826 / WCFS1) (Lactobacillus plantarum).